A 713-amino-acid polypeptide reads, in one-letter code: NAD(+) hydrolase SARM1 (713 aa).

The stretch at 53–96 (DVQAVLDGSLPALRSAIRTLRSSKDTGDLEETRRAIAETFQLVE) is one ARM 1 repeat. Residues W99, R106, 145-153 (EQILVSENR), and 186-189 (HMFK) each bind NAD(+). ARM repeat units lie at residues 110 to 149 (EEICNRIRLDGGLELLLQLMQTPAVEITYESAKLLEQILV), 151 to 189 (ENRDYVARMGLGVILNLTREQEDAQLARSVSGILEHMFK), 192 to 231 (EETSAQLITNGALDTILYWCRGTDPTVLRHCAVALSNCAM), 233 to 276 (GGHR…LAAN), 277 to 310 (REMEKEVVKSGTLELVEPFIASLDPDEFARNMLD), 311 to 350 (SADSMQGRTAADLQHLLPLLDGTRLEGKCIAAFYLCVETS), and 355 to 398 (QRNT…EEVP). 2 consecutive SAM domains span residues 408–472 (WKSG…LKTY) and 478–537 (CDPN…ILSA). The 144-residue stretch at 552 to 695 (KGPDVFISYR…KILRFLEGCP (144 aa)) folds into the TIR domain. Residues 561-562 (RR) and E591 contribute to the NAD(+) site. E634 is a catalytic residue.

This sequence belongs to the SARM1 family. As to quaternary structure, homooctamer; forms an octameric ring via SAM domains.

It is found in the cytoplasm. The protein resides in the cell projection. It localises to the axon. The protein localises to the dendrite. Its subcellular location is the synapse. It is found in the mitochondrion. The catalysed reaction is NAD(+) + H2O = ADP-D-ribose + nicotinamide + H(+). It catalyses the reaction NAD(+) = cyclic ADP-beta-D-ribose + nicotinamide + H(+). The enzyme catalyses NADP(+) + H2O = ADP-D-ribose 2'-phosphate + nicotinamide + H(+). With respect to regulation, autoinhibited: in the inactive state, the enzymatic TIR domain is held apart by the autoinhibiting ARM repeats. NAD(+)-binding to ARM repeats maintains an inactive state by promoting interaction between ARM repeats and the TIR domain, thereby facilitating inhibition of the enzymatic TIR domain. Following activation, possibly by nicotinamide mononucleotide (NMN), auto-inhibitory interactions are released, allowing self-association of the TIR domains and subsequent activation of the NAD(+) hydrolase (NADase) activity. Self-association of TIR domains is facilitated by the octamer of SAM domains. NAD(+) hydrolase, which plays a key role in axonal degeneration following injury by regulating NAD(+) metabolism. Acts as a negative regulator of MYD88- and TRIF-dependent toll-like receptor signaling pathway by promoting Wallerian degeneration, an injury-induced form of programmed subcellular death which involves degeneration of an axon distal to the injury site. Wallerian degeneration is triggerred by NAD(+) depletion: in response to injury, SARM1 is activated and catalyzes cleavage of NAD(+) into ADP-D-ribose (ADPR), cyclic ADPR (cADPR) and nicotinamide; NAD(+) cleavage promoting cytoskeletal degradation and axon destruction. Also able to hydrolyze NADP(+), but not other NAD(+)-related molecules. Can activate neuronal cell death in response to stress. The polypeptide is NAD(+) hydrolase SARM1 (Danio rerio (Zebrafish)).